A 660-amino-acid polypeptide reads, in one-letter code: Acetyl-coenzyme A synthetase (660 aa).

CoA contacts are provided by residues 197–200 (RGGK) and threonine 317. Residues 397-399 (GEP), 421-426 (DTFWQT), aspartate 512, and arginine 528 contribute to the ATP site. A CoA-binding site is contributed by serine 536. An ATP-binding site is contributed by arginine 539. Valine 550 and valine 555 together coordinate Mg(2+). At lysine 625 the chain carries N6-acetyllysine.

It belongs to the ATP-dependent AMP-binding enzyme family. It depends on Mg(2+) as a cofactor. Post-translationally, acetylated. Deacetylation by the SIR2-homolog deacetylase activates the enzyme.

It carries out the reaction acetate + ATP + CoA = acetyl-CoA + AMP + diphosphate. In terms of biological role, catalyzes the conversion of acetate into acetyl-CoA (AcCoA), an essential intermediate at the junction of anabolic and catabolic pathways. AcsA undergoes a two-step reaction. In the first half reaction, AcsA combines acetate with ATP to form acetyl-adenylate (AcAMP) intermediate. In the second half reaction, it can then transfer the acetyl group from AcAMP to the sulfhydryl group of CoA, forming the product AcCoA. This chain is Acetyl-coenzyme A synthetase, found in Cupriavidus taiwanensis (strain DSM 17343 / BCRC 17206 / CCUG 44338 / CIP 107171 / LMG 19424 / R1) (Ralstonia taiwanensis (strain LMG 19424)).